Here is a 472-residue protein sequence, read N- to C-terminus: MGKTLYEKVWEAHEVRKLKNGQSQLFIDLHLLHEVTSPQAFGMLKDLGLRVRYPHRTFATVDHIVPTHDRTEPFQDPLAQSMLEALRANTREHGITFFDLGSGNQGIVHVIGPQLGLTQPGMTIACGDSHTSTHGAFGAVAFGIGTSQVRDVLATQTLAAQKLKVRRINVEGRLAPGVYAKDVILHIIRHLGVKGGLGYAYEYGGSAVEAMDMESRMTLCNMSIEGGARIGYVNPDETTFQYLEGRPYVPKGSEWEEAKRRWLAWRSDPDASYDDVVTFRAEEIAPTVTWGITPGQAIPIDGRIPLLEELPEEERPVAEEALAYMGFRPGQPIKGVPIQVAFIGSCTNARLSDLREVARYLKGHKVKKGVRALVVPGSEWVARKAEEEGIAEVFREAGFEWRMPGCSMCLAMNPDRLEGDELCASSSNRNYKGRMGSPRGRTVLMSPLMVAAAAVAGEIADAREVFGLAGVR.

Residues Cys346, Cys406, and Cys409 each contribute to the [4Fe-4S] cluster site.

Belongs to the aconitase/IPM isomerase family. LeuC type 1 subfamily. As to quaternary structure, heterodimer of LeuC and LeuD. Requires [4Fe-4S] cluster as cofactor.

It carries out the reaction (2R,3S)-3-isopropylmalate = (2S)-2-isopropylmalate. It participates in amino-acid biosynthesis; L-leucine biosynthesis; L-leucine from 3-methyl-2-oxobutanoate: step 2/4. In terms of biological role, catalyzes the isomerization between 2-isopropylmalate and 3-isopropylmalate, via the formation of 2-isopropylmaleate. The chain is 3-isopropylmalate dehydratase large subunit from Thermus thermophilus (strain ATCC BAA-163 / DSM 7039 / HB27).